A 159-amino-acid chain; its full sequence is Major latex protein 146 (159 aa).

This sequence belongs to the MLP family. In terms of tissue distribution, laticifer.

Its subcellular location is the vacuole. It is found in the cytoplasmic vesicle. Functionally, not known; MLPs constitute up to 50% of the soluble latex protein. In Papaver somniferum (Opium poppy), this protein is Major latex protein 146 (MLP146).